The following is a 116-amino-acid chain: Small ribosomal subunit protein uS17 (116 aa).

Belongs to the universal ribosomal protein uS17 family. Part of the 30S ribosomal subunit.

In terms of biological role, one of the primary rRNA binding proteins, it binds specifically to the 5'-end of 16S ribosomal RNA. This is Small ribosomal subunit protein uS17 from Pyrococcus horikoshii (strain ATCC 700860 / DSM 12428 / JCM 9974 / NBRC 100139 / OT-3).